The following is a 658-amino-acid chain: MFQNNPLLAQLKQQIEANKEYVEGTVKASDKAFGFLECDKKSYFIPPMEMKKVMHGDKVKAVVKREDDKEQVEIDSLLEPMLDRFIAQVRFNKDNKLQLIVDHPSIKNIIPANTHKKVTETLESGDWVVAQLKTHPLRDDRFLFAQVTQFICKADDNFAPWWVTLARHEQPREPVANEKSYELHDELDREDLTSLYFTTIDSPSTQDMDDALYIEPIKQGEVQTGWRLVVAIADPTAYIPENSNLEKAARQRCFTNYLPGFNIPMLPRELSDDLCSLVPNEKRPALVGYIETDLAGNITGDTRFVSAWVESKAKLAYDNVSDYLEQVENAWQPESAETKQQIDWLHQFTLARIEWRRNNALLFKESGDYSFELNEDGSVRDIHVEYRRIANQMIEESMIIANICCAKFLADNAKTGVFNTHAGFDPKNLELAQKFLLDTLANDENRDALTALYAPEKLATLEGYCEMRRSIDEFPEKFLELRLRRYLTFAEFKSEVAPHLGLGISHYATWTSPIRKYGDMVNHRLIKQVLLGKQAKTVEEGILVRLQEARRQNRLVERDIADWLYARYLFPMVEQAVEFDCEIADVSRGGVRAKVIANGAQIFVPFSTLHDKKEEMEFRPEEIALYIKGEKAYQIGQAVKVKLTEVRLETRSIVGNII.

An RNB domain is found at 189–530 (REDLTSLYFT…VNHRLIKQVL (342 aa)). The S1 motif domain maps to 576–658 (AVEFDCEIAD…ETRSIVGNII (83 aa)).

The protein belongs to the RNR ribonuclease family. RNase II subfamily.

Its subcellular location is the cytoplasm. It catalyses the reaction Exonucleolytic cleavage in the 3'- to 5'-direction to yield nucleoside 5'-phosphates.. In terms of biological role, involved in mRNA degradation. Hydrolyzes single-stranded polyribonucleotides processively in the 3' to 5' direction. This is Exoribonuclease 2 from Actinobacillus pleuropneumoniae serotype 7 (strain AP76).